Consider the following 300-residue polypeptide: DNA packaging protein OPG160 (300 aa).

This sequence belongs to the orthopoxvirus OPG160 protein family. As to quaternary structure, interacts with protein OPG137.

In terms of biological role, participates in viral DNA packaging and virion morphogenesis. The polypeptide is DNA packaging protein OPG160 (OPG160) (Monkeypox virus).